Consider the following 143-residue polypeptide: uncharacterized protein (143 aa).

The next 4 helical transmembrane spans lie at 7–29 (LFLF…LSLV), 52–74 (FSLY…NTYL), 87–105 (LGVF…LWAG), and 120–142 (WLGI…IRLG).

It localises to the cell membrane. This is an uncharacterized protein from Aquifex aeolicus (strain VF5).